The sequence spans 1372 residues: Disease resistance protein RRS1B (1372 aa).

A TIR domain is found at 2–137 (TESEQIVYIS…ETVRDVYEKL (136 aa)). Positions 166-417 (VGIWGMPGIG…GCGFFPHVGI (252 aa)) constitute an NB-ARC domain. ATP is bound at residue 170-177 (GMPGIGKT). An LRR 1 repeat occupies 491–515 (PEEIEGMFLDTSNLSFDIKHVAFDN). One copy of the LRR 2; degenerate repeat lies at 528–544 (NPEVHHVNNFLKGSLSS). LRR repeat units follow at residues 545–568 (LPNV…NFDP), 570–591 (HLVE…TKDL), 614–637 (AQNL…TGQL), 638–658 (LHLR…PEIP), 659–681 (PNIE…IVKP), 693–718 (IPGL…KIST), 723–747 (PGKL…VNLE), 749–767 (LKAL…QGFP), 768–792 (RNLK…SLEF), and 798–823 (CVSL…CFDL). The short motif at 950–964 (INLHCWALGKAVERD) is the Nuclear localization signal element. Residues 1174–1240 (DRGSRSSDLW…YISEHNHPFP (67 aa)) constitute a DNA-binding region (WRKY). 2 disordered regions span residues 1246–1288 (LAGS…ASPP) and 1337–1372 (QTMF…ILNR). Residues 1249 to 1269 (STRSSSSKCSDVTTSASSTVS) are compositionally biased toward low complexity. A compositionally biased stretch (basic and acidic residues) spans 1270 to 1279 (QDKEGPDKSH). A compositionally biased stretch (polar residues) spans 1337–1348 (QTMFLSRRSSGG).

It belongs to the disease resistance TIR-NB-LRR family. In terms of assembly, interacts with RPS4B. RPS4B-RRS1B heterodimer interacts with the bacterial effectors AvrRps4 and PopP2.

The protein resides in the nucleus. Transcription factor. Interacts specifically with the W box (5'-(T)TGAC[CT]-3'), a frequently occurring elicitor-responsive cis-acting element. Also acts as a disease resistance protein that specifically recognizes the AvrRps4 type III effector avirulence protein from P.syringae. Heterodimerization with RPS4B is required to form a functional complex to recognize AvrRps4 and to mediate the hypersensitive response. This Arabidopsis thaliana (Mouse-ear cress) protein is Disease resistance protein RRS1B.